The following is a 384-amino-acid chain: Troponin T (384 aa).

Acidic residues predominate over residues 1 to 15; sequence MSDEEEYSEEEEEVP. Disordered regions lie at residues 1-23, 61-169, 237-257, and 313-384; these read MSDEEEYSEEEEEVPVDTKPRHS, RAKE…KEQL, LRHKALKKGLDPEALTGKYPP, and PKWF…EEEE. Basic and acidic residues-rich tracts occupy residues 61–74 and 81–126; these read RAKEEEDLKKLKDK and MRAD…EKKR. Basic and acidic residues predominate over residues 316–327; it reads FGERPGKKKGDP. Positions 328–384 are enriched in acidic residues; it reads ESPEEEEVKADAGVDDELEEPTFEPEPEPEPEEEAAEEEAEEEEEEEEEEEEEEEEE.

The protein belongs to the troponin T family.

Its function is as follows. Troponin T is the tropomyosin-binding subunit of troponin, the thin filament regulatory complex which confers calcium-sensitivity to striated muscle actomyosin ATPase activity. The protein is Troponin T (TNT) of Periplaneta americana (American cockroach).